A 523-amino-acid polypeptide reads, in one-letter code: Pentatricopeptide repeat-containing protein At1g52640, mitochondrial (523 aa).

Residues methionine 1–threonine 5 constitute a mitochondrion transit peptide. PPR repeat units follow at residues serine 101–glutamate 135, serine 137–proline 171, cysteine 172–proline 206, serine 207–valine 241, aspartate 242–proline 276, aspartate 277–proline 311, asparagine 312–proline 346, aspartate 347–proline 381, aspartate 382–proline 416, and threonine 417–proline 452. The interval lysine 498–isoleucine 523 is disordered. The span at serine 509–isoleucine 523 shows a compositional bias: acidic residues.

The protein belongs to the PPR family. P subfamily.

It localises to the mitochondrion. The sequence is that of Pentatricopeptide repeat-containing protein At1g52640, mitochondrial from Arabidopsis thaliana (Mouse-ear cress).